The sequence spans 43 residues: Metallothionein B (43 aa).

The interval 1 to 16 (SCAGSCKCKNCRCRSC) is beta. A divalent metal cation is bound by residues Cys2, Cys6, Cys8, Cys11, Cys13, Cys16, Cys20, Cys21, Cys23, Cys24, Cys28, Cys31, Cys35, and Cys37. The alpha stretch occupies residues 17–43 (RKSCCSCCPAGCNNCVKGCVCKEPASS).

Belongs to the metallothionein superfamily. Type 1 family.

In terms of biological role, metallothioneins have a high content of cysteine residues that bind various heavy metals. This chain is Metallothionein B, found in Colinus virginianus (Northern bobwhite).